Consider the following 664-residue polypeptide: DNA ligase (664 aa).

NAD(+) contacts are provided by residues 30 to 34 (DFEFD), 79 to 80 (SL), and Glu-109. The active-site N6-AMP-lysine intermediate is the Lys-111. Residues Arg-132, Glu-169, Lys-284, and Lys-308 each coordinate NAD(+). Zn(2+) is bound by residues Cys-403, Cys-406, Cys-421, and Cys-427. A BRCT domain is found at 586–664 (NRSEKLKGLT…NEDAFLNMLE (79 aa)).

The protein belongs to the NAD-dependent DNA ligase family. LigA subfamily. Requires Mg(2+) as cofactor. Mn(2+) is required as a cofactor.

It catalyses the reaction NAD(+) + (deoxyribonucleotide)n-3'-hydroxyl + 5'-phospho-(deoxyribonucleotide)m = (deoxyribonucleotide)n+m + AMP + beta-nicotinamide D-nucleotide.. In terms of biological role, DNA ligase that catalyzes the formation of phosphodiester linkages between 5'-phosphoryl and 3'-hydroxyl groups in double-stranded DNA using NAD as a coenzyme and as the energy source for the reaction. It is essential for DNA replication and repair of damaged DNA. This Parabacteroides distasonis (strain ATCC 8503 / DSM 20701 / CIP 104284 / JCM 5825 / NCTC 11152) protein is DNA ligase.